The following is a 238-amino-acid chain: Large ribosomal subunit protein uL2 (238 aa).

Positions 198-238 (NHPHGGGSHQSPSFPTTVSRNAPPGRKVGHIAARSTGRRKR) are disordered. The segment covering 206–217 (HQSPSFPTTVSR) has biased composition (polar residues).

The protein belongs to the universal ribosomal protein uL2 family. In terms of assembly, part of the 50S ribosomal subunit. Forms a bridge to the 30S subunit in the 70S ribosome.

Its function is as follows. One of the primary rRNA binding proteins. Required for association of the 30S and 50S subunits to form the 70S ribosome, for tRNA binding and peptide bond formation. It has been suggested to have peptidyltransferase activity; this is somewhat controversial. Makes several contacts with the 16S rRNA in the 70S ribosome. In Hyperthermus butylicus (strain DSM 5456 / JCM 9403 / PLM1-5), this protein is Large ribosomal subunit protein uL2.